A 690-amino-acid polypeptide reads, in one-letter code: Potassium-transporting ATPase ATP-binding subunit (690 aa).

The tract at residues 1–23 is disordered; it reads MNSTSTVRQPGGPRQQRRHTPKA. Helical transmembrane passes span 44 to 64, 78 to 98, 233 to 253, and 268 to 288; these read IMVK…TGML, AMFN…ANFA, IALT…VATL, and LLIA…LSAI. Catalysis depends on D321, which acts as the 4-aspartylphosphate intermediate. ATP-binding positions include D358, E362, 389–396, and K408; that span reads FSARTRMS. 2 residues coordinate Mg(2+): D531 and D535. The next 3 membrane-spanning stretches (helical) occupy residues 601–621, 627–647, and 665–685; these read FAII…IMDL, AVLS…PLAL, and ILVY…LIDL.

It belongs to the cation transport ATPase (P-type) (TC 3.A.3) family. Type IA subfamily. In terms of assembly, the system is composed of three essential subunits: KdpA, KdpB and KdpC.

Its subcellular location is the cell inner membrane. It catalyses the reaction K(+)(out) + ATP + H2O = K(+)(in) + ADP + phosphate + H(+). Functionally, part of the high-affinity ATP-driven potassium transport (or Kdp) system, which catalyzes the hydrolysis of ATP coupled with the electrogenic transport of potassium into the cytoplasm. This subunit is responsible for energy coupling to the transport system and for the release of the potassium ions to the cytoplasm. This Synechocystis sp. (strain ATCC 27184 / PCC 6803 / Kazusa) protein is Potassium-transporting ATPase ATP-binding subunit.